An 89-amino-acid chain; its full sequence is Probable Fe(2+)-trafficking protein (89 aa).

It belongs to the Fe(2+)-trafficking protein family.

Its function is as follows. Could be a mediator in iron transactions between iron acquisition and iron-requiring processes, such as synthesis and/or repair of Fe-S clusters in biosynthetic enzymes. This Acinetobacter baumannii (strain AB0057) protein is Probable Fe(2+)-trafficking protein.